Here is a 136-residue protein sequence, read N- to C-terminus: Histone H3 (136 aa).

The segment at 1–43 (MARTKQTARKSTGGKAPRKQLATKAARKSAPASGGVKKPHRYR) is disordered. 2 positions are modified to N6,N6,N6-trimethyllysine; alternate: Lys-5 and Lys-10. N6,N6-dimethyllysine; alternate is present on residues Lys-5 and Lys-10. Residues Lys-5 and Lys-10 each carry the N6-acetyllysine; alternate modification. N6-methyllysine; alternate is present on Lys-5. Ser-11 is modified (phosphoserine). An N6-acetyllysine mark is found at Lys-15 and Lys-24. An N6,N6,N6-trimethyllysine; alternate modification is found at Lys-28. An N6,N6-dimethyllysine; alternate modification is found at Lys-28. Lys-28 is subject to N6-methyllysine; alternate. Ser-29 carries the phosphoserine modification. Position 37 is an N6,N6,N6-trimethyllysine; alternate (Lys-37). Lys-37 carries the N6,N6-dimethyllysine; alternate modification. N6-methyllysine; alternate is present on Lys-37. Lys-80 carries the N6-methyllysine modification.

Belongs to the histone H3 family. As to quaternary structure, the nucleosome is a histone octamer containing two molecules each of H2A, H2B, H3 and H4 assembled in one H3-H4 heterotetramer and two H2A-H2B heterodimers. The octamer wraps approximately 147 bp of DNA. Interacts (via N-terminal tail mono-acetylated on Lys-15) with swsn-4 (via Bromo domain); the interaction is direct. In terms of processing, phosphorylated at Ser-11 and Ser-29 during M phase. Phosphorylation of Ser-11 requires air-2 but not air-1. Dephosphorylated by gsp-1 and/or gsp-2 during chromosome segregation. Acetylation is generally linked to gene activation. Post-translationally, methylation at Lys-5 is linked to gene activation and is absent from male inactive X chromosome chromatin. Methylation at Lys-10 is linked to gene repression and is enriched in male inactive X chromosome chromatin. Methylation at Lys-37 occurs on the entire length of autosomes during meiotic prophase. Trimethylation at Lys-10 and Lys-37 is specifically antagonized by jmjd-2. Dimethylation and trimethylation at Lys-28 occurs in all nuclei. The mes-2-mes-3-mes-6 complex may be responsible for Lys-28 methylation in most of the germline and in the early embryo.

Its subcellular location is the nucleus. It is found in the chromosome. In terms of biological role, core component of nucleosome. Nucleosomes wrap and compact DNA into chromatin, limiting DNA accessibility to the cellular machineries which require DNA as a template. Histones thereby play a central role in transcription regulation, DNA repair, DNA replication and chromosomal stability. DNA accessibility is regulated via a complex set of post-translational modifications of histones, also called histone code, and nucleosome remodeling. This is Histone H3 (his-2) from Caenorhabditis elegans.